We begin with the raw amino-acid sequence, 340 residues long: Phosphate acyltransferase (340 aa).

Belongs to the PlsX family. Homodimer. Probably interacts with PlsY.

Its subcellular location is the cytoplasm. It carries out the reaction a fatty acyl-[ACP] + phosphate = an acyl phosphate + holo-[ACP]. Its pathway is lipid metabolism; phospholipid metabolism. Catalyzes the reversible formation of acyl-phosphate (acyl-PO(4)) from acyl-[acyl-carrier-protein] (acyl-ACP). This enzyme utilizes acyl-ACP as fatty acyl donor, but not acyl-CoA. The chain is Phosphate acyltransferase from Helicobacter pylori (strain HPAG1).